Consider the following 120-residue polypeptide: Ribosome-binding factor A (120 aa).

Belongs to the RbfA family. Monomer. Binds 30S ribosomal subunits, but not 50S ribosomal subunits or 70S ribosomes.

The protein resides in the cytoplasm. Functionally, one of several proteins that assist in the late maturation steps of the functional core of the 30S ribosomal subunit. Associates with free 30S ribosomal subunits (but not with 30S subunits that are part of 70S ribosomes or polysomes). Required for efficient processing of 16S rRNA. May interact with the 5'-terminal helix region of 16S rRNA. In Chlamydia abortus (strain DSM 27085 / S26/3) (Chlamydophila abortus), this protein is Ribosome-binding factor A.